Consider the following 164-residue polypeptide: ATP synthase subunit b (164 aa).

The helical transmembrane segment at 8-28 (IGLFFWQTIVFLILLFLMAKF) threads the bilayer.

The protein belongs to the ATPase B chain family. F-type ATPases have 2 components, F(1) - the catalytic core - and F(0) - the membrane proton channel. F(1) has five subunits: alpha(3), beta(3), gamma(1), delta(1), epsilon(1). F(0) has three main subunits: a(1), b(2) and c(10-14). The alpha and beta chains form an alternating ring which encloses part of the gamma chain. F(1) is attached to F(0) by a central stalk formed by the gamma and epsilon chains, while a peripheral stalk is formed by the delta and b chains.

It localises to the cell membrane. F(1)F(0) ATP synthase produces ATP from ADP in the presence of a proton or sodium gradient. F-type ATPases consist of two structural domains, F(1) containing the extramembraneous catalytic core and F(0) containing the membrane proton channel, linked together by a central stalk and a peripheral stalk. During catalysis, ATP synthesis in the catalytic domain of F(1) is coupled via a rotary mechanism of the central stalk subunits to proton translocation. In terms of biological role, component of the F(0) channel, it forms part of the peripheral stalk, linking F(1) to F(0). The polypeptide is ATP synthase subunit b (Christiangramia forsetii (strain DSM 17595 / CGMCC 1.15422 / KT0803) (Gramella forsetii)).